The primary structure comprises 399 residues: Elongation factor Tu (399 aa).

The tr-type G domain occupies 10 to 207 (KPHMNVGTIG…AMDTYFPDPV (198 aa)). The segment at 19 to 26 (GQIDHGKT) is G1. 19-26 (GQIDHGKT) provides a ligand contact to GTP. Thr-26 is a Mg(2+) binding site. Residues 60–64 (GITIN) are G2. The interval 81–84 (DCPG) is G3. Residues 81 to 85 (DCPGH) and 136 to 139 (NKVD) each bind GTP. Residues 136–139 (NKVD) are G4. A G5 region spans residues 173–175 (SAL).

Belongs to the TRAFAC class translation factor GTPase superfamily. Classic translation factor GTPase family. EF-Tu/EF-1A subfamily. As to quaternary structure, monomer.

It localises to the cytoplasm. The catalysed reaction is GTP + H2O = GDP + phosphate + H(+). Functionally, GTP hydrolase that promotes the GTP-dependent binding of aminoacyl-tRNA to the A-site of ribosomes during protein biosynthesis. The polypeptide is Elongation factor Tu (Fervidobacterium islandicum).